We begin with the raw amino-acid sequence, 523 residues long: MASATSNNPASSSMSPRRISGNHGSPTASVAQSPRRPSRQVSSPWTQIVRGESEPIAAAAAVAGPSSPQSRAPIEPIASVSVAAPTAAVLTVEAAAGDEKSEASGGQDNAGKKPVWKRPSNGASEVGPVMGASSWPALSETTKAPSNKSSSDSLKSLGDVPSSSSASSSVPVTQGIANASVPAPKQAGRANPNPTPNHSRQRSFKQRNGASGSANGTVSQPSAQGSFTELPSHNPSPRGQNQKNGFASQNHGGTENPSQRDSYRNQNGNHHQSHGGRRNQEHGNQNWTFQRSFNGREGNAQSQRGTPAFVRHPSPTVQPIPQFMAAQPFPSHIPFPTELAQSSYYPRMPYMTPIPHGPQFFYHYQDPPLHMKLHKQIQYYFSDENLITDIYLRGFMNNEGFVPLRVVAGFKKVAELTDNIQQIVEALQNSPHVEVQGDFIRKRDNWQNWVLRRNPTGSGPQSVDRADAVAKRLGNLSVDQSSADPIGGSSSQLQPTEALSDDQQQSSSTAPVSNHNAPDGANR.

A compositionally biased stretch (low complexity) spans 1 to 16; it reads MASATSNNPASSSMSP. 2 disordered regions span residues 1–52 and 95–313; these read MASA…VRGE and AAGD…VRHP. An N-acetylalanine modification is found at Ala2. Polar residues predominate over residues 22-31; sequence NHGSPTASVA. Composition is skewed to low complexity over residues 32–44 and 146–169; these read QSPR…VSSP and SNKS…ASSS. Phosphoserine is present on Ser33. Polar residues-rich tracts occupy residues 206–270 and 282–305; these read QRNG…NGNH and HGNQ…SQRG. Positions 363–452 constitute an HTH La-type RNA-binding domain; the sequence is HYQDPPLHMK…RDNWQNWVLR (90 aa). Residues 474–523 form a disordered region; sequence GNLSVDQSSADPIGGSSSQLQPTEALSDDQQQSSSTAPVSNHNAPDGANR. The span at 477–516 shows a compositional bias: polar residues; the sequence is SVDQSSADPIGGSSSQLQPTEALSDDQQQSSSTAPVSNHN.

The protein belongs to the LARP family. As to expression, age-dependent accumulation in rosette leaves.

It localises to the cytoplasm. Functionally, promotes leaf senescence mediated by abscisic acid (ABA), salicylic acid (SA) and jasmonic acid (MeJA), probably though the induction of expression of senescence-associated genes (SAGs) and defense-related genes. In Arabidopsis thaliana (Mouse-ear cress), this protein is La-related protein 1C (LARP1C).